We begin with the raw amino-acid sequence, 156 residues long: Small ribosomal subunit protein uS7 (156 aa).

The protein belongs to the universal ribosomal protein uS7 family. In terms of assembly, part of the 30S ribosomal subunit. Contacts proteins S9 and S11.

In terms of biological role, one of the primary rRNA binding proteins, it binds directly to 16S rRNA where it nucleates assembly of the head domain of the 30S subunit. Is located at the subunit interface close to the decoding center, probably blocks exit of the E-site tRNA. This chain is Small ribosomal subunit protein uS7, found in Desulfitobacterium hafniense (strain DSM 10664 / DCB-2).